A 218-amino-acid chain; its full sequence is Protein-L-isoaspartate O-methyltransferase (218 aa).

Ser-66 is an active-site residue.

It belongs to the methyltransferase superfamily. L-isoaspartyl/D-aspartyl protein methyltransferase family.

The protein localises to the cytoplasm. It carries out the reaction [protein]-L-isoaspartate + S-adenosyl-L-methionine = [protein]-L-isoaspartate alpha-methyl ester + S-adenosyl-L-homocysteine. Catalyzes the methyl esterification of L-isoaspartyl residues in peptides and proteins that result from spontaneous decomposition of normal L-aspartyl and L-asparaginyl residues. It plays a role in the repair and/or degradation of damaged proteins. This Caulobacter sp. (strain K31) protein is Protein-L-isoaspartate O-methyltransferase.